A 151-amino-acid polypeptide reads, in one-letter code: Small ribosomal subunit protein uS15z (151 aa).

The protein belongs to the universal ribosomal protein uS15 family.

This Arabidopsis thaliana (Mouse-ear cress) protein is Small ribosomal subunit protein uS15z (RPS13A).